A 199-amino-acid polypeptide reads, in one-letter code: GTP cyclohydrolase-2 (199 aa).

52–56 (RMHSE) provides a ligand contact to GTP. Zn(2+) contacts are provided by Cys-57, Cys-68, and Cys-70. GTP contacts are provided by residues Gln-73, 94 to 96 (EGR), and Thr-116. The active-site Proton acceptor is the Asp-128. The active-site Nucleophile is the Arg-130. GTP is bound by residues Thr-151 and Lys-156.

This sequence belongs to the GTP cyclohydrolase II family. Zn(2+) serves as cofactor.

It carries out the reaction GTP + 4 H2O = 2,5-diamino-6-hydroxy-4-(5-phosphoribosylamino)-pyrimidine + formate + 2 phosphate + 3 H(+). Its pathway is cofactor biosynthesis; riboflavin biosynthesis; 5-amino-6-(D-ribitylamino)uracil from GTP: step 1/4. In terms of biological role, catalyzes the conversion of GTP to 2,5-diamino-6-ribosylamino-4(3H)-pyrimidinone 5'-phosphate (DARP), formate and pyrophosphate. This is GTP cyclohydrolase-2 from Aliivibrio fischeri (strain MJ11) (Vibrio fischeri).